Consider the following 313-residue polypeptide: Probable myosin light chain kinase DDB_G0292624 (313 aa).

Residues 6–264 form the Protein kinase domain; the sequence is YELHKEIGKG…AKQALEHPWI (259 aa). Residues 12–20 and Lys-35 contribute to the ATP site; that span reads IGKGAFSVV. Residue Asp-125 is the Proton acceptor of the active site.

This sequence belongs to the protein kinase superfamily. CAMK Ser/Thr protein kinase family. CaMK subfamily.

The enzyme catalyses L-seryl-[myosin light chain] + ATP = O-phospho-L-seryl-[myosin light chain] + ADP + H(+). It carries out the reaction L-threonyl-[myosin light chain] + ATP = O-phospho-L-threonyl-[myosin light chain] + ADP + H(+). Its activity is regulated as follows. Does not have a calmodulin-binding domain. May phosphorylate a specific serine in the N-terminus of a myosin light chain. This is Probable myosin light chain kinase DDB_G0292624 from Dictyostelium discoideum (Social amoeba).